Reading from the N-terminus, the 130-residue chain is Blasticidin-S deaminase (130 aa).

One can recognise a CMP/dCMP-type deaminase domain in the interval 1-129 (MPLSQEESTL…ELLPSGYVWE (129 aa)). Ser28 provides a ligand contact to substrate. Cys54 is a binding site for Zn(2+). The active-site Proton donor is the Glu56. Position 82 (Arg82) interacts with substrate. The Zn(2+) site is built by Cys88 and Cys91. 2 residues coordinate substrate: Tyr126 and Trp128.

It belongs to the cytidine and deoxycytidylate deaminase family. As to quaternary structure, homotetramer. Zn(2+) serves as cofactor.

The catalysed reaction is blasticidin S + H2O + H(+) = deaminohydroxyblasticidin S + NH4(+). Catalyzes the deamination of the cytosine moiety of the antibiotics blasticidin S, cytomycin and acetylblasticidin S. The sequence is that of Blasticidin-S deaminase (bsd) from Aspergillus terreus.